The chain runs to 93 residues: Ribonuclease P protein component 1 (93 aa).

It belongs to the eukaryotic/archaeal RNase P protein component 1 family. Consists of a catalytic RNA component and at least 4-5 protein subunits.

It localises to the cytoplasm. It catalyses the reaction Endonucleolytic cleavage of RNA, removing 5'-extranucleotides from tRNA precursor.. In terms of biological role, part of ribonuclease P, a protein complex that generates mature tRNA molecules by cleaving their 5'-ends. This is Ribonuclease P protein component 1 from Methanosphaera stadtmanae (strain ATCC 43021 / DSM 3091 / JCM 11832 / MCB-3).